We begin with the raw amino-acid sequence, 199 residues long: Charged multivesicular body protein 1b (199 aa).

Residues 26-48 (DKEEKAEKAKIKKAIQKGNMEVA) are a coiled coil. The segment at 132 to 156 (MEDTMSSTTTLTTPQGQVDMLLQEM) is interaction with IST1. The segment at 167–199 (ELPQGQTGSVGTSVASAEQDELSQRLARLRDQV) is disordered. Polar residues predominate over residues 170–182 (QGQTGSVGTSVAS). The segment at 174 to 199 (GSVGTSVASAEQDELSQRLARLRDQV) is interaction with SPAST. Positions 178 to 199 (TSVASAEQDELSQRLARLRDQV) form a coiled coil. The tract at residues 180–196 (VASAEQDELSQRLARLR) is interaction with VPS4A, MITD1 and STAMBP. Residues 180-199 (VASAEQDELSQRLARLRDQV) form an interaction with VTA1 region. Positions 183-199 (AEQDELSQRLARLRDQV) are interaction with VPS4B. An MIT-interacting motif motif is present at residues 186–196 (DELSQRLARLR).

This sequence belongs to the SNF7 family. In terms of assembly, probable peripherally associated component of the endosomal sorting required for transport complex III (ESCRT-III). ESCRT-III components are thought to multimerize to form a flat lattice on the perimeter membrane of the endosome. Several assembly forms of ESCRT-III may exist that interact and act sequentially. Interacts with CHMP1A. Interacts with VTA1; the interaction probably involves the open conformation of CHMP1B. Interacts with CHMP2A. Interacts with VPS4A; the interaction is direct. Interacts with VPS4B; the interaction is direct. Interacts with SPAST (via MIT domain); the interaction is direct. Interacts with IST1. Interacts with MITD1. Interacts with STAMBP.

Its subcellular location is the cytoplasm. The protein resides in the cytosol. It localises to the endosome. The protein localises to the late endosome membrane. In terms of biological role, probable peripherally associated component of the endosomal sorting required for transport complex III (ESCRT-III) which is involved in multivesicular bodies (MVBs) formation and sorting of endosomal cargo proteins into MVBs. MVBs contain intraluminal vesicles (ILVs) that are generated by invagination and scission from the limiting membrane of the endosome and mostly are delivered to lysosomes enabling degradation of membrane proteins, such as stimulated growth factor receptors, lysosomal enzymes and lipids. The MVB pathway appears to require the sequential function of ESCRT-O, -I,-II and -III complexes. ESCRT-III proteins mostly dissociate from the invaginating membrane before the ILV is released. The ESCRT machinery also functions in topologically equivalent membrane fission events, such as the terminal stages of cytokinesis and the budding of enveloped viruses (lentiviruses). ESCRT-III proteins are believed to mediate the necessary vesicle extrusion and/or membrane fission activities, possibly in conjunction with the AAA ATPase VPS4. Involved in cytokinesis. Involved in recruiting VPS4A and/or VPS4B and SPAST to the midbody of dividing cells. The sequence is that of Charged multivesicular body protein 1b (CHMP1B) from Bos taurus (Bovine).